The primary structure comprises 917 residues: Auxin response factor 17 (917 aa).

Positions 134–236 form a DNA-binding region, TF-B3; the sequence is FCKTLTASDT…QLLLGIRRAN (103 aa). The interval 571 to 649 is disordered; sequence SVPNALSPFS…RPTAVPVPDP (79 aa). Composition is skewed to low complexity over residues 576–594 and 604–620; these read LSPF…MTLQ and SYPD…NTST. Residues 786-870 enclose the PB1 domain; that stretch reads ATFVKVYKSG…SCIKILSPQE (85 aa).

This sequence belongs to the ARF family. Homodimers and heterodimers. In terms of tissue distribution, expressed in roots, culms, leaves and young panicles.

It localises to the nucleus. Its function is as follows. Auxin response factors (ARFs) are transcriptional factors that bind specifically to the DNA sequence 5'-TGTCTC-3' found in the auxin-responsive promoter elements (AuxREs). This chain is Auxin response factor 17 (ARF17), found in Oryza sativa subsp. japonica (Rice).